The sequence spans 197 residues: Cyclin-dependent kinase inhibitor 1B (197 aa).

The span at methionine 1–proline 11 shows a compositional bias: polar residues. The segment at methionine 1–glycine 34 is disordered. Serine 10 bears the Phosphoserine; by UHMK1 mark. Residues glutamate 14–lysine 25 show a composition bias toward basic and acidic residues. The interval aspartate 51–proline 91 is interaction with CDK2. Tyrosine 74 bears the Phosphotyrosine; by SRC mark. The tract at residues glutamate 86–threonine 197 is disordered. Tyrosine 88 bears the Phosphotyrosine; by ABL, LYN, SRC and JAK2 mark. The residue at position 89 (tyrosine 89) is a Phosphotyrosine. The segment covering glutamine 104–arginine 113 has biased composition (polar residues). The short motif at lysine 153–arginine 169 is the Nuclear localization signal element. Threonine 170 bears the Phosphothreonine; by CaMK1 mark. Polar residues predominate over residues serine 175–glutamine 186. The residue at position 187 (threonine 187) is a Phosphothreonine; by PKB/AKT1, CDK1 and CDK2. Threonine 197 is modified (phosphothreonine; by CaMK1, PKB/AKT1, RPS6KA1, RPS6KA3 and PIM1).

It belongs to the CDI family. As to quaternary structure, forms a ternary complex composed of CCNE1, CDK2 and CDKN1B. Interacts directly with CCNE1; the interaction is inhibited by CDK2-dependent phosphorylation on Thr-187. Interacts with COPS5, subunit of the COP9 signalosome complex; the interaction leads to CDKN1B degradation. Interacts with NUP50; the interaction leads to nuclear import and degradation of phosphorylated CDKN1B. Interacts with CCND1 and SNX6. Interacts (Thr-197-phosphorylated form) with 14-3-3 proteins, binds strongly YWHAQ, weakly YWHAE and YWHAH, but not YWHAB nor YWHAZ; the interaction with YWHAQ results in translocation to the cytoplasm. Interacts with AKT1 and LYN; the interactions lead to cytoplasmic mislocation, phosphorylation of CDKN1B and inhibition of cell cycle arrest. Forms a ternary complex with CCNA2 and CDK2; CDKN1B inhibits the kinase activity of CDK2 through conformational rearrangements. Interacts (unphosphorylated form) with CDK2. Forms a complex with CDK2 and SPDYA, but does not directly interact with SPDYA. Forms a ternary complex composed of cyclin D, CDK4 and CDKN1B. Interacts (phosphorylated on Tyr-88 and Tyr-89) with CDK4; the interaction is required for cyclin D and CDK4 complex assembly, induces nuclear translocation and activates the CDK4 kinase activity. Interacts with GRB2. Interacts with PIM1. Identified in a complex with SKP1, SKP2 and CKS1B. Interacts with UHMK1; the interaction leads to cytoplasmic mislocation, phosphorylation of CDKN1B and inhibition of cell cycle arrest. Also interacts with CDK1. Dephosphorylated on Thr-187 by PPM1H, leading to CDKN1B stability. In terms of processing, phosphorylated; phosphorylation occurs on serine, threonine and tyrosine residues. Phosphorylation on Ser-10 is the major site of phosphorylation in resting cells, takes place at the G(0)-G(1) phase and leads to protein stability. Phosphorylation on other sites is greatly enhanced by mitogens, growth factors, MYC and in certain cancer cell lines. The phosphorylated form found in the cytoplasm is inactivate. Phosphorylation on Thr-197 is required for interaction with 14-3-3 proteins. Phosphorylation on Thr-187, by CDK1 and CDK2 leads to protein ubiquitination and proteasomal degradation. Tyrosine phosphorylation promotes this process. Phosphorylation by PKB/AKT1 can be suppressed by LY294002, an inhibitor of the catalytic subunit of PI3K. Phosphorylation on Tyr-88 and Tyr-89 has no effect on binding CDK2, but is required for binding CDK4. Dephosphorylated on tyrosine residues by G-CSF. Dephosphorylated on Thr-187 by PPM1H, leading to CDKN1B stability. Post-translationally, ubiquitinated; in the cytoplasm by the KPC complex (composed of RNF123/KPC1 and UBAC1/KPC2) and, in the nucleus, by SCF(SKP2). The latter requires prior phosphorylation on Thr-187. Ubiquitinated; by a TRIM21-containing SCF(SKP2)-like complex; leads to its degradation. Subject to degradation in the lysosome. Interaction with SNX6 promotes lysosomal degradation.

It is found in the nucleus. Its subcellular location is the cytoplasm. The protein localises to the endosome. In terms of biological role, important regulator of cell cycle progression. Inhibits the kinase activity of CDK2 bound to cyclin A, but has little inhibitory activity on CDK2 bound to SPDYA. Involved in G1 arrest. Potent inhibitor of cyclin E- and cyclin A-CDK2 complexes. Forms a complex with cyclin type D-CDK4 complexes and is involved in the assembly, stability, and modulation of CCND1-CDK4 complex activation. Acts either as an inhibitor or an activator of cyclin type D-CDK4 complexes depending on its phosphorylation state and/or stoichometry. The polypeptide is Cyclin-dependent kinase inhibitor 1B (Cdkn1b) (Mus musculus (Mouse)).